We begin with the raw amino-acid sequence, 122 residues long: Large ribosomal subunit protein uL14 (122 aa).

This sequence belongs to the universal ribosomal protein uL14 family. Part of the 50S ribosomal subunit. Forms a cluster with proteins L3 and L19. In the 70S ribosome, L14 and L19 interact and together make contacts with the 16S rRNA in bridges B5 and B8.

In terms of biological role, binds to 23S rRNA. Forms part of two intersubunit bridges in the 70S ribosome. The sequence is that of Large ribosomal subunit protein uL14 from Cereibacter sphaeroides (strain ATCC 17029 / ATH 2.4.9) (Rhodobacter sphaeroides).